The chain runs to 198 residues: GTP cyclohydrolase-2 (198 aa).

52–56 (RMHSE) lines the GTP pocket. Residues C57, C68, and C70 each contribute to the Zn(2+) site. Residues Q73, 94–96 (EGR), and T116 contribute to the GTP site. The Proton acceptor role is filled by D128. Residue R130 is the Nucleophile of the active site. T151 and K156 together coordinate GTP.

Belongs to the GTP cyclohydrolase II family. Zn(2+) is required as a cofactor.

The catalysed reaction is GTP + 4 H2O = 2,5-diamino-6-hydroxy-4-(5-phosphoribosylamino)-pyrimidine + formate + 2 phosphate + 3 H(+). Its pathway is cofactor biosynthesis; riboflavin biosynthesis; 5-amino-6-(D-ribitylamino)uracil from GTP: step 1/4. In terms of biological role, catalyzes the conversion of GTP to 2,5-diamino-6-ribosylamino-4(3H)-pyrimidinone 5'-phosphate (DARP), formate and pyrophosphate. This is GTP cyclohydrolase-2 from Vibrio vulnificus (strain CMCP6).